The chain runs to 178 residues: Interleukin-10 (178 aa).

The N-terminal stretch at Met1–Ala18 is a signal peptide. Disulfide bonds link Cys30–Cys126 and Cys80–Cys132. N-linked (GlcNAc...) asparagine glycosylation occurs at Asn134.

The protein belongs to the IL-10 family. In terms of assembly, homodimer. Interacts with IL10RA and IL10RB.

The protein resides in the secreted. In terms of biological role, major immune regulatory cytokine that acts on many cells of the immune system where it has profound anti-inflammatory functions, limiting excessive tissue disruption caused by inflammation. Mechanistically, IL10 binds to its heterotetrameric receptor comprising IL10RA and IL10RB leading to JAK1 and STAT2-mediated phosphorylation of STAT3. In turn, STAT3 translocates to the nucleus where it drives expression of anti-inflammatory mediators. Targets antigen-presenting cells (APCs) such as macrophages and monocytes and inhibits their release of pro-inflammatory cytokines including granulocyte-macrophage colony-stimulating factor /GM-CSF, granulocyte colony-stimulating factor/G-CSF, IL-1 alpha, IL-1 beta, IL-6, IL-8 and TNF-alpha. Also interferes with antigen presentation by reducing the expression of MHC-class II and co-stimulatory molecules, thereby inhibiting their ability to induce T cell activation. In addition, controls the inflammatory response of macrophages by reprogramming essential metabolic pathways including mTOR signaling. The chain is Interleukin-10 (IL10) from Macaca fascicularis (Crab-eating macaque).